The chain runs to 462 residues: Anthranilate synthase component 1 (462 aa).

L-tryptophan-binding positions include serine 37 and 244–246 (PYM). Chorismate is bound at residue 279–280 (GT). Glutamate 306 is a Mg(2+) binding site. Residues tyrosine 394, arginine 414, 428 to 430 (GAG), and glycine 430 each bind chorismate. Position 443 (glutamate 443) interacts with Mg(2+).

This sequence belongs to the anthranilate synthase component I family. As to quaternary structure, heterotetramer consisting of two non-identical subunits: a beta subunit (TrpG) and a large alpha subunit (TrpE). It depends on Mg(2+) as a cofactor.

The enzyme catalyses chorismate + L-glutamine = anthranilate + pyruvate + L-glutamate + H(+). It functions in the pathway amino-acid biosynthesis; L-tryptophan biosynthesis; L-tryptophan from chorismate: step 1/5. Its activity is regulated as follows. Feedback inhibited by tryptophan. In terms of biological role, part of a heterotetrameric complex that catalyzes the two-step biosynthesis of anthranilate, an intermediate in the biosynthesis of L-tryptophan. In the first step, the glutamine-binding beta subunit (TrpG) of anthranilate synthase (AS) provides the glutamine amidotransferase activity which generates ammonia as a substrate that, along with chorismate, is used in the second step, catalyzed by the large alpha subunit of AS (TrpE) to produce anthranilate. In the absence of TrpG, TrpE can synthesize anthranilate directly from chorismate and high concentrations of ammonia. This is Anthranilate synthase component 1 (trpE) from Thermus thermophilus (strain ATCC 27634 / DSM 579 / HB8).